The chain runs to 742 residues: Phosphatidylinositol 4-phosphate 5-kinase its3 (742 aa).

2 disordered regions span residues 1–21 and 82–228; these read MKID…IPSY and LFKE…PDIG. Low complexity-rich tracts occupy residues 90–105 and 129–142; these read PSNP…SNDS and PSSN…LQNL. Composition is skewed to polar residues over residues 158-181 and 193-218; these read RSSS…SSSQ and EKNS…TSGS. The PIPK domain occupies 264–662; the sequence is GHENYVTAYN…RFYKFVESSI (399 aa). The interval 677-742 is disordered; it reads QDGQRVNKQQ…RNVTTNTSSS (66 aa). Polar residues predominate over residues 680 to 719; it reads QRVNKQQSVNAGNVRTNNKHGSLNNNTAPSSRNAKSTSAH.

As to quaternary structure, interacts with opy1 (via domain PH 1); the interaction is direct but opy1 does not appear to regulate its3 localization or function. Phosphorylated by casein kinase I. Phosphorylation inactivates the enzyme.

It is found in the cell membrane. It carries out the reaction a 1,2-diacyl-sn-glycero-3-phospho-(1D-myo-inositol 4-phosphate) + ATP = a 1,2-diacyl-sn-glycero-3-phospho-(1D-myo-inositol-4,5-bisphosphate) + ADP + H(+). Catalyzes the phosphorylation of phosphatidylinositol 4-phosphate on the fifth hydroxyl of the myo-inositol ring, to form phosphatidylinositol 4,5-bisphosphate. Involved, together with the calcineurin ppb1, in cytokinesis. The sequence is that of Phosphatidylinositol 4-phosphate 5-kinase its3 (its3) from Schizosaccharomyces pombe (strain 972 / ATCC 24843) (Fission yeast).